A 373-amino-acid chain; its full sequence is Muscleblind-like protein 2 (373 aa).

4 consecutive C3H1-type zinc fingers follow at residues 13–41 (WLTL…HPPK), 47–73 (NGRV…HPPT), 176–204 (TDKL…HPAD), and 212–238 (DNTV…HPPA).

It belongs to the muscleblind family. Interacts with ITGA3. In terms of tissue distribution, expressed in heart, brain, placenta, lung, liver, skeletal muscle, kidney and pancreas.

The protein localises to the nucleus. Its subcellular location is the cytoplasm. Functionally, mediates pre-mRNA alternative splicing regulation. Acts either as activator or repressor of splicing on specific pre-mRNA targets. Inhibits cardiac troponin-T (TNNT2) pre-mRNA exon inclusion but induces insulin receptor (IR) pre-mRNA exon inclusion in muscle. Antagonizes the alternative splicing activity pattern of CELF proteins. RNA-binding protein that binds to 5'ACACCC-3' core sequence, termed zipcode, within the 3'UTR of ITGA3. Binds to CUG triplet repeat expansion in myotonic dystrophy muscle cells by sequestering the target RNAs. Together with RNA binding proteins RBPMS and RBFOX2, activates vascular smooth muscle cells alternative splicing events. Regulates NCOR2 alternative splicing. Seems to regulate expression and localization of ITGA3 by transporting it from the nucleus to cytoplasm at adhesion plaques. May play a role in myotonic dystrophy pathophysiology (DM). The chain is Muscleblind-like protein 2 (MBNL2) from Homo sapiens (Human).